The primary structure comprises 262 residues: Tryptophan synthase alpha chain (262 aa).

Active-site proton acceptor residues include Glu-49 and Asp-60.

It belongs to the TrpA family. Tetramer of two alpha and two beta chains.

The enzyme catalyses (1S,2R)-1-C-(indol-3-yl)glycerol 3-phosphate + L-serine = D-glyceraldehyde 3-phosphate + L-tryptophan + H2O. It functions in the pathway amino-acid biosynthesis; L-tryptophan biosynthesis; L-tryptophan from chorismate: step 5/5. The alpha subunit is responsible for the aldol cleavage of indoleglycerol phosphate to indole and glyceraldehyde 3-phosphate. This is Tryptophan synthase alpha chain from Aquifex aeolicus (strain VF5).